The sequence spans 322 residues: Gluconeogenesis factor (322 aa).

It belongs to the gluconeogenesis factor family.

It localises to the cytoplasm. Required for morphogenesis under gluconeogenic growth conditions. In Listeria monocytogenes serovar 1/2a (strain ATCC BAA-679 / EGD-e), this protein is Gluconeogenesis factor.